Reading from the N-terminus, the 144-residue chain is Deoxyuridine 5'-triphosphate nucleotidohydrolase (144 aa).

Substrate contacts are provided by residues 63–65, asparagine 76, and 80–82; these read RSG and TVD.

Belongs to the dUTPase family. Mg(2+) is required as a cofactor.

The catalysed reaction is dUTP + H2O = dUMP + diphosphate + H(+). Its pathway is pyrimidine metabolism; dUMP biosynthesis; dUMP from dCTP (dUTP route): step 2/2. Functionally, this enzyme is involved in nucleotide metabolism: it produces dUMP, the immediate precursor of thymidine nucleotides and it decreases the intracellular concentration of dUTP so that uracil cannot be incorporated into DNA. The sequence is that of Deoxyuridine 5'-triphosphate nucleotidohydrolase from Treponema denticola (strain ATCC 35405 / DSM 14222 / CIP 103919 / JCM 8153 / KCTC 15104).